The sequence spans 97 residues: Na(+)/H(+) antiporter subunit F1 (97 aa).

3 helical membrane passes run 3–23, 35–55, and 60–80; these read HNVI…AMLI, VVAL…FSIL, and YMIV…AVFS.

This sequence belongs to the CPA3 antiporters (TC 2.A.63) subunit F family. As to quaternary structure, may form a heterooligomeric complex that consists of seven subunits: mnhA1, mnhB1, mnhC1, mnhD1, mnhE1, mnhF1 and mnhG1.

The protein localises to the cell membrane. Functionally, mnh complex is a Na(+)/H(+) antiporter involved in Na(+) excretion. This Staphylococcus aureus (strain Mu3 / ATCC 700698) protein is Na(+)/H(+) antiporter subunit F1 (mnhF1).